Here is a 113-residue protein sequence, read N- to C-terminus: Putative insulin-like growth factor 2-associated protein (113 aa).

As to expression, expressed in fetal and adult liver.

In Homo sapiens (Human), this protein is Putative insulin-like growth factor 2-associated protein.